The sequence spans 283 residues: Prolyl 4-hydroxylase 1 (283 aa).

Residues 1 to 6 lie on the Cytoplasmic side of the membrane; the sequence is MAPAMK. Residues 7–27 traverse the membrane as a helical; Signal-anchor for type II membrane protein segment; that stretch reads IVFGLLTFVTVGMVIGSLLQL. Residues 28-283 are Lumenal-facing; that stretch reads AFINRLEDSY…TKWMRQKATS (256 aa). The Fe2OG dioxygenase domain occupies 162-279; sequence NGELIQVLRY…KWSATKWMRQ (118 aa). Fe cation contacts are provided by His180, Asp182, and His260. Residue Lys270 coordinates 2-oxoglutarate.

The protein belongs to the P4HA family. Fe(2+) is required as a cofactor. Requires L-ascorbate as cofactor.

The protein resides in the endoplasmic reticulum membrane. The enzyme catalyses L-prolyl-[collagen] + 2-oxoglutarate + O2 = trans-4-hydroxy-L-prolyl-[collagen] + succinate + CO2. Catalyzes the post-translational formation of 4-hydroxyproline in -Xaa-Pro-Gly- sequences in proline-rich peptide sequences of plant glycoproteins and other proteins. Hydroxylates preferentially prolines in second positions in the -Pro-Pro-Gly-triplets. Hydroxyprolines are important constituent of many plant cell wall glycoproteins such as extensins, hydroxyproline-rich glycoproteins, lectins and arabinogalactan proteins. Can hydroxylate collagen-like peptides and hypoxia-inducible transcription factor peptides. The polypeptide is Prolyl 4-hydroxylase 1 (Arabidopsis thaliana (Mouse-ear cress)).